The sequence spans 867 residues: MTTFMVSKRFRPPIFLHRFINPKPISSQTRFLHPPDNQSRDISDSTTETISTLEFPHKTSVPNHSPLTSTSETENHVDDARVIEVLLGRRNDPVSALQYCNWVKPLHRLCEGGDVFWVLIHILLSSIHTHDRASNLLVMFVSNNPTLIPNVMVNNLVDSSKRFGFELTPRAFNYLLNAYIRNKRMDYAVDCFGLMVDRKVVPFVPYVNNVLSSLVRSNLIDEAKEIYNKMVLIGVAGDNVTTQLLMRASLRERKPEEAVKIFRRVMSRGAEPDGLLFSLAVQAACKTPDLVMALDLLREMRGKLGVPASQETYTSVIVAFVKEGNMEEAVRVMDEMVGFGIPMSVIAATSLVNGYCKGNELGKALDLFNRMEEEGLAPDKVMFSVMVEWFCKNMEMEKAIEFYMRMKSVRIAPSSVLVHTMIQGCLKAESPEAALEIFNDSFESWIAHGFMCNKIFLLFCKQGKVDAATSFLKMMEQKGIEPNVVFYNNMMLAHCRMKNMDLARSIFSEMLEKGLEPNNFTYSILIDGFFKNKDEQNAWDVINQMNASNFEANEVIYNTIINGLCKVGQTSKAKEMLQNLIKEKRYSMSCTSYNSIIDGFVKVGDTDSAVETYREMSENGKSPNVVTFTSLINGFCKSNRMDLALEMTHEMKSMELKLDLPAYGALIDGFCKKNDMKTAYTLFSELPELGLMPNVSVYNSLISGFRNLGKMDAAIDLYKKMVNDGISCDLFTYTTMIDGLLKDGNINLASDLYSELLDLGIVPDEILHMVLVNGLSKKGQFLKASKMLEEMKKKDVTPNVLLYSTVIAGHHREGNLNEAFRLHDEMLEKGIVHDDTVFNLLVSGRVEKPPAASKISSLASPEMRSSY.

Residues 1–49 (MTTFMVSKRFRPPIFLHRFINPKPISSQTRFLHPPDNQSRDISDSTTET) constitute a mitochondrion transit peptide. The segment at 27–74 (SQTRFLHPPDNQSRDISDSTTETISTLEFPHKTSVPNHSPLTSTSETE) is disordered. The span at 60-72 (SVPNHSPLTSTSE) shows a compositional bias: polar residues. PPR repeat units follow at residues 168–202 (TPRAFNYLLNAYIRNKRMDYAVDCFGLMVDRKVVP), 203–237 (FVPYVNNVLSSLVRSNLIDEAKEIYNKMVLIGVAG), 238–272 (DNVTTQLLMRASLRERKPEEAVKIFRRVMSRGAEP), 273–307 (DGLLFSLAVQAACKTPDLVMALDLLREMRGKLGVP), 309–343 (SQETYTSVIVAFVKEGNMEEAVRVMDEMVGFGIPM), 344–378 (SVIAATSLVNGYCKGNELGKALDLFNRMEEEGLAP), 379–413 (DKVMFSVMVEWFCKNMEMEKAIEFYMRMKSVRIAP), 414–444 (SSVLVHTMIQGCLKAESPEAALEIFNDSFES), 448–482 (HGFMCNKIFLLFCKQGKVDAATSFLKMMEQKGIEP), 483–517 (NVVFYNNMMLAHCRMKNMDLARSIFSEMLEKGLEP), 518–552 (NNFTYSILIDGFFKNKDEQNAWDVINQMNASNFEA), 553–588 (NEVIYNTIINGLCKVGQTSKAKEMLQNLIKEKRYSM), 589–623 (SCTSYNSIIDGFVKVGDTDSAVETYREMSENGKSP), 624–658 (NVVTFTSLINGFCKSNRMDLALEMTHEMKSMELKL), 659–693 (DLPAYGALIDGFCKKNDMKTAYTLFSELPELGLMP), 694–728 (NVSVYNSLISGFRNLGKMDAAIDLYKKMVNDGISC), 729–763 (DLFTYTTMIDGLLKDGNINLASDLYSELLDLGIVP), 764–798 (DEILHMVLVNGLSKKGQFLKASKMLEEMKKKDVTP), and 799–833 (NVLLYSTVIAGHHREGNLNEAFRLHDEMLEKGIVH).

Belongs to the PPR family. P subfamily. In terms of tissue distribution, expressed in lateral organ junctions and shoot apical meristem (SAM).

Its subcellular location is the mitochondrion. Its function is as follows. Involved in lateral organ development and boundary demarcation. The polypeptide is Pentatricopeptide repeat-containing protein At2g39230, mitochondrial (LOJ) (Arabidopsis thaliana (Mouse-ear cress)).